We begin with the raw amino-acid sequence, 379 residues long: Eukaryotic translation initiation factor 3 subunit H (379 aa).

The MPN domain maps to 17 to 170; it reads VQIDSLVVMK…IRAYRLSTKA (154 aa). A compositionally biased stretch (basic and acidic residues) spans 280–291; it reads RQAENEQREARG. Positions 280–300 are disordered; sequence RQAENEQREARGEPPLSFDDI.

It belongs to the eIF-3 subunit H family. In terms of assembly, component of the eukaryotic translation initiation factor 3 (eIF-3) complex.

Its subcellular location is the cytoplasm. Its function is as follows. Component of the eukaryotic translation initiation factor 3 (eIF-3) complex, which is involved in protein synthesis of a specialized repertoire of mRNAs and, together with other initiation factors, stimulates binding of mRNA and methionyl-tRNAi to the 40S ribosome. The eIF-3 complex specifically targets and initiates translation of a subset of mRNAs involved in cell proliferation. This Brugia malayi (Filarial nematode worm) protein is Eukaryotic translation initiation factor 3 subunit H.